The chain runs to 333 residues: Diacylglycerol acyltransferase/mycolyltransferase Ag85C (333 aa).

The N-terminal stretch at 1 to 44 (MKFLQQMRKLFGLAAKFPARLTIAVIGTALLAGLVGVVGDTAIA) is a signal peptide. 86–87 (LR) contributes to the substrate binding site. The tract at residues 102–112 (FEEYYHSGLSV) is fibronectin-binding. Substrate-binding residues include serine 170 and asparagine 198. The Nucleophile role is filled by serine 170. The active site involves glutamate 274. Residues 276 to 279 (LTLS) and 306 to 308 (HSW) contribute to the substrate site. Histidine 306 is a catalytic residue.

This sequence belongs to the mycobacterial A85 antigen family. In terms of assembly, homodimer.

The protein resides in the secreted. The catalysed reaction is an acyl-CoA + a 1,2-diacyl-sn-glycerol = a triacyl-sn-glycerol + CoA. It carries out the reaction 2 alpha,alpha'-trehalose 6-mycolate = alpha,alpha'-trehalose 6,6'-bismycolate + alpha,alpha-trehalose. The antigen 85 proteins (FbpA, FbpB, FbpC) are responsible for the high affinity of mycobacteria to fibronectin, a large adhesive glycoprotein, which facilitates the attachment of M.tuberculosis to murine alveolar macrophages (AMs). They also help to maintain the integrity of the cell wall by catalyzing the transfer of mycolic acids to cell wall arabinogalactan and through the synthesis of alpha,alpha-trehalose dimycolate (TDM, cord factor). They catalyze the transfer of a mycoloyl residue from one molecule of alpha,alpha-trehalose monomycolate (TMM) to another TMM, leading to the formation of TDM. This Mycobacterium leprae (strain TN) protein is Diacylglycerol acyltransferase/mycolyltransferase Ag85C (fbpC).